Reading from the N-terminus, the 327-residue chain is MTKEVLIHQIIDVLARAGFALSDRCNIRPRSFDVAARKDDTLLLCKVLFNIDGLNEETAREMKYLAEYLGGSAIVVGAKTRDQMLEDSVVYMRYDILALSVQTLYDYFVENIRPLVSAAPGGLYVSIEGDLLKKARTTQSMSLGTLASMVGVSRRTISKYEEEGMDASIDVVLHLEDIFGVELAKPIDILKSCGSRKPRKKAEPEKEEPKGKPGTLLPEDLILNTISMLGYDVLPTAQAPFKAISRDKSSVILTGVSEFNTTVIKRAHLMSSISCITETQSVFIINGRSKLKSVENTVLIEKKELDTISDSQELLDFIEERKDTHEA.

Residues 132–190 (LKKARTTQSMSLGTLASMVGVSRRTISKYEEEGMDASIDVVLHLEDIFGVELAKPIDIL) enclose the HTH cro/C1-type domain. The H-T-H motif DNA-binding region spans 143 to 162 (LGTLASMVGVSRRTISKYEE). Residues 195 to 214 (SRKPRKKAEPEKEEPKGKPG) are disordered. Residues 201–211 (KAEPEKEEPKG) are compositionally biased toward basic and acidic residues.

The sequence is that of Putative HTH-type transcriptional regulatory protein MM_0444 from Methanosarcina mazei (strain ATCC BAA-159 / DSM 3647 / Goe1 / Go1 / JCM 11833 / OCM 88) (Methanosarcina frisia).